The following is a 486-amino-acid chain: Vicilin-like seed storage protein At3g22640 (486 aa).

Residues 1-22 form the signal peptide; sequence MAITNKLIITLLLLISIAVVHC. Residues 34 to 60 form a disordered region; sequence PPQQGEQEGPRRRPGGGSGEGWEEEST. Cupin type-1 domains follow at residues 64–223 and 278–448; these read YHFR…ELLG and FNLF…KVAE. N-linked (GlcNAc...) asparagine glycosylation is found at N168, N316, and N455.

The protein belongs to the 7S seed storage protein family. Predominantly expressed in the embryo and endosperm of developing seeds. Also present in seedlings.

Seed storage protein. Its function is as follows. (Microbial infection) Involved in tobacco mosaic virus (TMV) replication. Required for endoplasmic reticulum (ER) aggregations mediated by TMV main replicase (P126) upon viral infection. The protein is Vicilin-like seed storage protein At3g22640 of Arabidopsis thaliana (Mouse-ear cress).